We begin with the raw amino-acid sequence, 154 residues long: Protein X (154 aa).

The tract at residues 68–117 (PCALRFTSARRMETTVNAPGNLPKVLHKRTLGLSVMSTTDLEAYFKDCVF) is mitochondrial targeting sequence.

The protein belongs to the orthohepadnavirus protein X family. May form homodimer. May interact with host CEBPA, CFLAR, CREB1, DDB1, E4F1, HBXIP, HSPD1/HSP60, NFKBIA, POLR2E and SMAD4. Interacts with host SMC5-SMC6 complex and induces its degradation. Interacts with host TRPC4AP; leading to prevent ubiquitination of TRPC4AP. Interacts with host PLSCR1; this interaction promotes ubiquitination and degradation of HBx and impairs HBx-mediated cell proliferation. Post-translationally, a fraction may be phosphorylated in insect cells and HepG2 cells, a human hepatoblastoma cell line. Phosphorylated in vitro by host protein kinase C or mitogen-activated protein kinase. N-acetylated in insect cells.

It localises to the host cytoplasm. It is found in the host nucleus. The protein resides in the host mitochondrion. Multifunctional protein that plays a role in silencing host antiviral defenses and promoting viral transcription. Does not seem to be essential for HBV infection. May be directly involved in development of cirrhosis and liver cancer (hepatocellular carcinoma). Most of cytosolic activities involve modulation of cytosolic calcium. The effect on apoptosis is controversial depending on the cell types in which the studies have been conducted. May induce apoptosis by localizing in mitochondria and causing loss of mitochondrial membrane potential. May also modulate apoptosis by binding host CFLAR, a key regulator of the death-inducing signaling complex (DISC). Promotes viral transcription by using the host E3 ubiquitin ligase DDB1 to target the SMC5-SMC6 complex to proteasomal degradation. This host complex would otherwise bind to viral episomal DNA, and prevents its transcription. Moderately stimulates transcription of many different viral and cellular transcription elements. Promoters and enhancers stimulated by HBx contain DNA binding sites for NF-kappa-B, AP-1, AP-2, c-EBP, ATF/CREB, or the calcium-activated factor NF-AT. This is Protein X from Hepatitis B virus genotype B2 (isolate Vietnam/16091/1992) (HBV-B).